Here is a 398-residue protein sequence, read N- to C-terminus: Acetate kinase 1 (398 aa).

Residue Asn10 participates in Mg(2+) binding. Lys17 is an ATP binding site. Residue Arg89 coordinates substrate. Asp146 functions as the Proton donor/acceptor in the catalytic mechanism. ATP-binding positions include 206-210 (HLGNG), 281-283 (DCR), and 329-333 (GIGEN). Glu384 provides a ligand contact to Mg(2+).

Belongs to the acetokinase family. As to quaternary structure, homodimer. Mg(2+) is required as a cofactor. Requires Mn(2+) as cofactor.

Its subcellular location is the cytoplasm. The enzyme catalyses acetate + ATP = acetyl phosphate + ADP. The protein operates within metabolic intermediate biosynthesis; acetyl-CoA biosynthesis; acetyl-CoA from acetate: step 1/2. In terms of biological role, catalyzes the formation of acetyl phosphate from acetate and ATP. Can also catalyze the reverse reaction. The chain is Acetate kinase 1 from Neisseria meningitidis serogroup B (strain ATCC BAA-335 / MC58).